Here is a 333-residue protein sequence, read N- to C-terminus: Mitochondrial fission regulator 1 (333 aa).

S119 carries the post-translational modification Phosphoserine. Residues 286–307 (YRSDSQDEVEKGVPKSESEATS) show a composition bias toward basic and acidic residues. The segment at 286–315 (YRSDSQDEVEKGVPKSESEATSERVLFGPH) is disordered.

The protein belongs to the MTFR1 family.

The protein localises to the mitochondrion. Its function is as follows. May play a role in mitochondrial aerobic respiration. May also regulate mitochondrial organization and fission. This is Mitochondrial fission regulator 1 (MTFR1) from Pongo abelii (Sumatran orangutan).